Consider the following 124-residue polypeptide: MaFF-interacting protein (124 aa).

A coiled-coil region spans residues 54 to 96 (LVSEVEELYKSITALREKLLQAEQSLRNLKDIHMSLEKDVTAM).

The protein belongs to the tektin family. In terms of assembly, interacts with MIS18A. Interacts (via its coiled-coil region) with MAFF. Strongly expressed in brain, kidney and ovary. Moderately expressed in liver, spleen, thymus, prostate, testis, small intestine and colon. Weakly expressed in heart, placenta, lung and leukocytes.

Its subcellular location is the cytoplasm. It localises to the nucleus. The protein localises to the nucleolus. Acts as a coactivator of MAFF transcriptional activity. Inhibits cell growth and colony-forming efficiency. This is MaFF-interacting protein (MAFIP) from Homo sapiens (Human).